Reading from the N-terminus, the 739-residue chain is Platelet endothelial cell adhesion molecule (739 aa).

Residues Met-1 to Gly-27 form the signal peptide. At Gln-28–Lys-599 the chain is on the extracellular side. Ig-like C2-type domains are found at residues Asn-35 to Thr-120, Gly-145 to Gly-213, and Pro-236 to Ser-315. Asn-52, Asn-84, and Asn-151 each carry an N-linked (GlcNAc...) asparagine glycan. Residues Cys-57 and Cys-109 are joined by a disulfide bond. Disulfide bonds link Cys-152–Cys-206 and Cys-256–Cys-304. 9 N-linked (GlcNAc...) asparagine glycosylation sites follow: Asn-301, Asn-320, Asn-356, Asn-371, Asn-435, Asn-446, Asn-453, Asn-550, and Asn-578. Ig-like C2-type domains are found at residues Pro-328 to Thr-403, Gly-424 to Arg-493, and Pro-499 to Thr-590. Intrachain disulfides connect Cys-347/Cys-386, Cys-431/Cys-476, and Cys-522/Cys-571. Residues Gly-600 to Ala-618 traverse the membrane as a helical segment. Topologically, residues Lys-619–Ser-739 are cytoplasmic. Cys-620 carries the S-palmitoyl cysteine lipid modification. 2 consecutive short sequence motifs (ITIM motif) follow at residues Val-687–Val-692 and Thr-712–Ile-717. Tyr-689 and Tyr-714 each carry phosphotyrosine; by FER. A membrane-bound segment which detaches upon phosphorylation region spans residues Thr-708–Ser-730. The may play a role in cytoprotective signaling stretch occupies residues Pro-722–Ser-739. Residues Ser-730 and Ser-735 each carry the phosphoserine modification.

In terms of assembly, trans-homodimer (via Ig-like C2-type 1 and Ig-like C2-type 2 domains); trans-homodimerization is required for cell-cell interaction. Forms a complex with BDKRB2 and GNAQ. Interacts with BDKRB2 and GNAQ. Interacts with PTPN11; Tyr-714 is critical for PTPN11 recruitment. Interacts with FER. Interacts with CD177; the interaction is Ca(2+)-dependent; the interaction is direct. Post-translationally, phosphorylated on Ser and Tyr residues by src kinases after cellular activation. Upon activation, phosphorylated on Ser-730 which probably initiates the dissociation of the membrane-interaction segment (residues 708-730) from the cell membrane allowing the sequential phosphorylation of Tyr-714 and Tyr-689. Constitutively phosphorylated on Ser-735 in resting platelets. Phosphorylated on tyrosine residues by FER and FES in response to FCER1 activation. In endothelial cells Fyn mediates mechanical-force (stretch or pull) induced tyrosine phosphorylation. In terms of processing, palmitoylation by ZDHHC21 is necessary for cell surface expression in endothelial cells and enrichment in membrane rafts.

The protein localises to the cell membrane. Its subcellular location is the membrane raft. The protein resides in the cell junction. In terms of biological role, cell adhesion molecule which is required for leukocyte transendothelial migration (TEM) under most inflammatory conditions. Tyr-689 plays a critical role in TEM and is required for efficient trafficking of PECAM1 to and from the lateral border recycling compartment (LBRC) and is also essential for the LBRC membrane to be targeted around migrating leukocytes. Trans-homophilic interaction may play a role in endothelial cell-cell adhesion via cell junctions. Heterophilic interaction with CD177 plays a role in transendothelial migration of neutrophils. Homophilic ligation of PECAM1 prevents macrophage-mediated phagocytosis of neighboring viable leukocytes by transmitting a detachment signal. Promotes macrophage-mediated phagocytosis of apoptotic leukocytes by tethering them to the phagocytic cells; PECAM1-mediated detachment signal appears to be disabled in apoptotic leukocytes. Modulates bradykinin receptor BDKRB2 activation. Regulates bradykinin- and hyperosmotic shock-induced ERK1/2 activation in endothelial cells. Induces susceptibility to atherosclerosis. This chain is Platelet endothelial cell adhesion molecule (PECAM1), found in Bos taurus (Bovine).